The chain runs to 632 residues: Biosynthetic arginine decarboxylase (632 aa).

Lysine 101 bears the N6-(pyridoxal phosphate)lysine mark. Substrate is bound at residue 281–291 (FDVGGGLGVDY).

Belongs to the Orn/Lys/Arg decarboxylase class-II family. SpeA subfamily. It depends on Mg(2+) as a cofactor. Requires pyridoxal 5'-phosphate as cofactor.

The enzyme catalyses L-arginine + H(+) = agmatine + CO2. It participates in amine and polyamine biosynthesis; agmatine biosynthesis; agmatine from L-arginine: step 1/1. Functionally, catalyzes the biosynthesis of agmatine from arginine. This Escherichia coli O157:H7 (strain EC4115 / EHEC) protein is Biosynthetic arginine decarboxylase.